Here is an 81-residue protein sequence, read N- to C-terminus: Teretoxin Tsu6.8 (81 aa).

An N-terminal signal peptide occupies residues 1–21; that stretch reads MATSGRLLCLCLVLGLIFESL. A propeptide spanning residues 22-45 is cleaved from the precursor; sequence GHPVMGEKRAGENASPSARSLPKR.

It belongs to the teretoxin M (TM) superfamily. Post-translationally, contains 3 disulfide bonds. As to expression, expressed by the venom duct.

Its subcellular location is the secreted. This chain is Teretoxin Tsu6.8, found in Terebra subulata (Chocolate spotted auger).